Consider the following 951-residue polypeptide: 2-oxoglutarate dehydrogenase E1 component (951 aa).

Residues 906-925 (RRRRSSPAEGNPTAHKQEQA) are disordered.

This sequence belongs to the alpha-ketoglutarate dehydrogenase family. In terms of assembly, homodimer. Part of the 2-oxoglutarate dehydrogenase (OGDH) complex composed of E1 (2-oxoglutarate dehydrogenase), E2 (dihydrolipoamide succinyltransferase) and E3 (dihydrolipoamide dehydrogenase); the complex contains multiple copies of the three enzymatic components (E1, E2 and E3). Thiamine diphosphate is required as a cofactor.

The catalysed reaction is N(6)-[(R)-lipoyl]-L-lysyl-[protein] + 2-oxoglutarate + H(+) = N(6)-[(R)-S(8)-succinyldihydrolipoyl]-L-lysyl-[protein] + CO2. In terms of biological role, E1 component of the 2-oxoglutarate dehydrogenase (OGDH) complex which catalyzes the decarboxylation of 2-oxoglutarate, the first step in the conversion of 2-oxoglutarate to succinyl-CoA and CO(2). The protein is 2-oxoglutarate dehydrogenase E1 component of Exiguobacterium sp. (strain ATCC BAA-1283 / AT1b).